A 179-amino-acid chain; its full sequence is Ribosome maturation factor RimM (179 aa).

Residues 102–179 enclose the PRC barrel domain; sequence DGEYYWYQLE…EMKVEWDADF (78 aa).

Belongs to the RimM family. As to quaternary structure, binds ribosomal protein uS19.

It localises to the cytoplasm. Functionally, an accessory protein needed during the final step in the assembly of 30S ribosomal subunit, possibly for assembly of the head region. Essential for efficient processing of 16S rRNA. May be needed both before and after RbfA during the maturation of 16S rRNA. It has affinity for free ribosomal 30S subunits but not for 70S ribosomes. The chain is Ribosome maturation factor RimM from Pseudomonas syringae pv. tomato (strain ATCC BAA-871 / DC3000).